A 290-amino-acid chain; its full sequence is Small ribosomal subunit protein uS11 (290 aa).

Residues 243 to 271 (DWEAAPAGFPATGEWSDAAPGAAAPNWDA) form a disordered region. Residues 257 to 271 (WSDAAPGAAAPNWDA) show a composition bias toward low complexity.

This sequence belongs to the universal ribosomal protein uS2 family. As to quaternary structure, component of the small ribosomal subunit (SSU). Mature N.crassa ribosomes consist of a small (40S) and a large (60S) subunit. The 40S small subunit contains 1 molecule of ribosomal RNA (18S rRNA) and at least 32 different proteins. The large 60S subunit contains 3 rRNA molecules (26S, 5.8S and 5S rRNA) and at least 42 different proteins. Interacts with rps21.

It is found in the cytoplasm. Its function is as follows. Component of the ribosome, a large ribonucleoprotein complex responsible for the synthesis of proteins in the cell. The small ribosomal subunit (SSU) binds messenger RNAs (mRNAs) and translates the encoded message by selecting cognate aminoacyl-transfer RNA (tRNA) molecules. The large subunit (LSU) contains the ribosomal catalytic site termed the peptidyl transferase center (PTC), which catalyzes the formation of peptide bonds, thereby polymerizing the amino acids delivered by tRNAs into a polypeptide chain. The nascent polypeptides leave the ribosome through a tunnel in the LSU and interact with protein factors that function in enzymatic processing, targeting, and the membrane insertion of nascent chains at the exit of the ribosomal tunnel. uS2 is required for the assembly and/or stability of the 40S ribosomal subunit. Required for the processing of the 20S rRNA-precursor to mature 18S rRNA in a late step of the maturation of 40S ribosomal subunits. The protein is Small ribosomal subunit protein uS11 of Neurospora crassa (strain ATCC 24698 / 74-OR23-1A / CBS 708.71 / DSM 1257 / FGSC 987).